Here is a 359-residue protein sequence, read N- to C-terminus: ATP-dependent kinase YFH7 (359 aa).

31–39 (GPPGSGKST) is a binding site for ATP.

The protein belongs to the YFH7 family.

Functionally, ATP-dependent kinase that could be involved in endoplasmic reticulum membrane assembly. This is ATP-dependent kinase YFH7 (YFH7) from Vanderwaltozyma polyspora (strain ATCC 22028 / DSM 70294 / BCRC 21397 / CBS 2163 / NBRC 10782 / NRRL Y-8283 / UCD 57-17) (Kluyveromyces polysporus).